Here is a 437-residue protein sequence, read N- to C-terminus: MITNTKLDPIETASVDELQALQTQRLKWTLKHAYENVPMYRRKFDAAGVHPDDFRELSDLRKFPCTTKQDLRDNYPFDTFAVPMEQVVRIHASSGTTGKPTVVGYTQNDIDNWANIVARSLRAAGGSPKDKIHVAYGYGLFTGGLGAHYGAERLGATVIPMSGGQTEKQAQLIRDFQPDMIMVTPSYCLNLIEELERQLGGDASGCSLRVGVFGAEPWTQAMRKEIERRLGITALDIYGLSEVMGPGVAMECLETTDGPTIWEDHFYPEIVNPHDGTPLADGEHGELLFTTLTKEALPVIRYRTRDLTRLLPGTARTMRRMDRISGRSDDMLIIRGVNVFPSQLEEEIVKFEHLSPHYQLEVNRRGHLDSLSVKVELKESSLTLTHEQRCQVCHQLRHRIKSMVGISTDVMIVNCGSIPRSEGKACRVFDLRNIVGA.

The protein belongs to the phenylacetyl-CoA ligase family. In terms of assembly, monomer.

It catalyses the reaction 2-phenylacetate + ATP + CoA = phenylacetyl-CoA + AMP + diphosphate. It functions in the pathway aromatic compound metabolism; phenylacetate degradation. In terms of biological role, catalyzes the activation of phenylacetic acid (PA) to phenylacetyl-CoA (PA-CoA). This Escherichia coli (strain K12) protein is Phenylacetate-coenzyme A ligase (paaK).